The following is a 321-amino-acid chain: Cytochrome c biogenesis protein CcsA (321 aa).

Transmembrane regions (helical) follow at residues 17-37 (VVSIVIIIHFLTLLVNEFVGL), 48-68 (TFFCLTGLLITRWIYSGHLPI), 71-91 (LYESLIFLSWIFSIIHMVPYF), 98-118 (LSTITAPSTFFTQGFATWGLL), 143-163 (MVSGYAALLCGSLLSAALLVI), 225-245 (ILSIGFLFLTIGILSGAVWAN), 259-273 (TWAFITWTIFAIYFH), and 286-306 (AIVASIGFLIIWICYFGVNLL).

It belongs to the CcmF/CycK/Ccl1/NrfE/CcsA family. As to quaternary structure, may interact with Ccs1.

It localises to the plastid. The protein localises to the chloroplast thylakoid membrane. Required during biogenesis of c-type cytochromes (cytochrome c6 and cytochrome f) at the step of heme attachment. This chain is Cytochrome c biogenesis protein CcsA, found in Populus trichocarpa (Western balsam poplar).